Consider the following 221-residue polypeptide: Ribosome maturation factor RimM (221 aa).

The tract at residues 1–23 (MTERKQGAAAPRPLNRPQGESPK) is disordered. The 78-residue stretch at 144-221 (ENEFYWVDLI…RIVVDWGLDY (78 aa)) folds into the PRC barrel domain.

The protein belongs to the RimM family. As to quaternary structure, binds ribosomal protein uS19.

It localises to the cytoplasm. Functionally, an accessory protein needed during the final step in the assembly of 30S ribosomal subunit, possibly for assembly of the head region. Essential for efficient processing of 16S rRNA. May be needed both before and after RbfA during the maturation of 16S rRNA. It has affinity for free ribosomal 30S subunits but not for 70S ribosomes. This chain is Ribosome maturation factor RimM, found in Cupriavidus pinatubonensis (strain JMP 134 / LMG 1197) (Cupriavidus necator (strain JMP 134)).